Reading from the N-terminus, the 234-residue chain is Proteasome subunit alpha type-2 (234 aa).

Residue Ala-2 is modified to N-acetylalanine. Residue Tyr-121 is modified to Phosphotyrosine.

It belongs to the peptidase T1A family. In terms of assembly, the 26S proteasome consists of a 20S proteasome core and two 19S regulatory subunits. The 20S proteasome core is a barrel-shaped complex made of 28 subunits that are arranged in four stacked rings. The two outer rings are each formed by seven alpha subunits, and the two inner rings are formed by seven beta subunits. The proteolytic activity is exerted by three beta-subunits PSMB5, PSMB6 and PSMB7.

The protein localises to the cytoplasm. The protein resides in the nucleus. In terms of biological role, component of the 20S core proteasome complex involved in the proteolytic degradation of most intracellular proteins. This complex plays numerous essential roles within the cell by associating with different regulatory particles. Associated with two 19S regulatory particles, forms the 26S proteasome and thus participates in the ATP-dependent degradation of ubiquitinated proteins. The 26S proteasome plays a key role in the maintenance of protein homeostasis by removing misfolded or damaged proteins that could impair cellular functions, and by removing proteins whose functions are no longer required. Associated with the PA200 or PA28, the 20S proteasome mediates ubiquitin-independent protein degradation. This type of proteolysis is required in several pathways including spermatogenesis (20S-PA200 complex) or generation of a subset of MHC class I-presented antigenic peptides (20S-PA28 complex). This Xenopus laevis (African clawed frog) protein is Proteasome subunit alpha type-2 (psma2).